A 122-amino-acid chain; its full sequence is Large ribosomal subunit protein uL14 (122 aa).

This sequence belongs to the universal ribosomal protein uL14 family. In terms of assembly, part of the 50S ribosomal subunit. Forms a cluster with proteins L3 and L19. In the 70S ribosome, L14 and L19 interact and together make contacts with the 16S rRNA in bridges B5 and B8.

Functionally, binds to 23S rRNA. Forms part of two intersubunit bridges in the 70S ribosome. The protein is Large ribosomal subunit protein uL14 of Desulfitobacterium hafniense (strain DSM 10664 / DCB-2).